We begin with the raw amino-acid sequence, 74 residues long: Peptide BmKa2 (74 aa).

A signal peptide spans 1-24; that stretch reads MSSKTLLVLLLVGVLVSTFFTADA.

The protein belongs to the non-disulfide-bridged peptide (NDBP) superfamily. Long chain multifunctional peptide (group 2) family. As to expression, expressed by the venom gland.

Its subcellular location is the secreted. In terms of biological role, highly acidic peptide that may have antibacterial activity. The polypeptide is Peptide BmKa2 (Olivierus martensii (Manchurian scorpion)).